We begin with the raw amino-acid sequence, 432 residues long: MSELKDCPLQFHDFKSVDHVKLCPRYTAVLSRSEDDGIGIEELDTLQLELETLLSSASRRLRVLEAETQILTDWQDKKGDRRFLKLGKEHELGTPIKHSKPKKQKLDGKGSHASGPGPGRPKSRNMQQKMQEYEFTDDPVDVPRIPKNDAPNRFWASVEPYCADITNDEIKVLEDLLKTPEDEADYYKIPPLGKHYSQRWAQEDLLEEQKDGARTALSGDKKKGILGPLAELDSKDVDSLLKKSESQHDQPEDGCPFGHLTQRLLQALVEENIISPVEDSPIPEISGKESGTDGASTSPRSQNKPFSAPHTKSLEVRIKEELIAQGLLESDDRPAEDSEDEVLAELRKRQAELKALSAHNRAKKQELLRLAKEEMNRQELRQRVRMADNEVMDAFRKIMAARQKKRTPTKKEKDQAWKALKERESILKLLDG.

Positions 40–69 (IEELDTLQLELETLLSSASRRLRVLEAETQ) form a coiled coil. 2 disordered regions span residues 88–127 (KEHE…RNMQ) and 275–313 (SPVE…HTKS). Over residues 293-305 (DGASTSPRSQNKP) the composition is skewed to polar residues. The stretch at 367–407 (LLRLAKEEMNRQELRQRVRMADNEVMDAFRKIMAARQKKRT) forms a coiled coil.

Belongs to the NGG1 family.

Its subcellular location is the nucleus. In terms of biological role, functions as a component of the PCAF complex. The PCAF complex is capable of efficiently acetylating histones in a nucleosomal context. This is Transcriptional adapter 3 (tada3) from Xenopus tropicalis (Western clawed frog).